The chain runs to 212 residues: Large ribosomal subunit protein uL3 (212 aa).

At glutamine 154 the chain carries N5-methylglutamine.

The protein belongs to the universal ribosomal protein uL3 family. Part of the 50S ribosomal subunit. Forms a cluster with proteins L14 and L19. Post-translationally, methylated by PrmB.

Its function is as follows. One of the primary rRNA binding proteins, it binds directly near the 3'-end of the 23S rRNA, where it nucleates assembly of the 50S subunit. The protein is Large ribosomal subunit protein uL3 of Hydrogenovibrio crunogenus (strain DSM 25203 / XCL-2) (Thiomicrospira crunogena).